Here is a 101-residue protein sequence, read N- to C-terminus: uncharacterized protein (101 aa).

Residues 1-27 form the signal peptide; sequence MQLTGSIYPWFTAYALLKSTLMELINS. Helical transmembrane passes span 42–64 and 79–98; these read LVPYWLSIRLSLLYFKLTEAISF and TFVFGYIVNCFFIIHLNTFL.

It localises to the cytoplasm. The protein resides in the nucleus membrane. This is an uncharacterized protein from Schizosaccharomyces pombe (strain 972 / ATCC 24843) (Fission yeast).